Here is a 779-residue protein sequence, read N- to C-terminus: Translation initiation factor IF-2 (779 aa).

The disordered stretch occupies residues 44–193 (RQLDNAVDGT…TPPKPKELPE (150 aa)). Positions 53-65 (TNKKAEAPKKETT) are enriched in basic and acidic residues. Over residues 66-81 (SNENGNSKGPNKPNMT) the composition is skewed to polar residues. 2 stretches are compositionally biased toward low complexity: residues 82 to 93 (NSNEKSNKPNKP) and 117 to 167 (ANTS…NNKG). One can recognise a tr-type G domain in the interval 280 to 449 (ERPPVVTIMG…LLVSEVEELK (170 aa)). The G1 stretch occupies residues 289–296 (GHVDHGKT). 289–296 (GHVDHGKT) is a binding site for GTP. Residues 314–318 (GITQH) form a G2 region. The G3 stretch occupies residues 335–338 (DTPG). GTP-binding positions include 335 to 339 (DTPGH) and 389 to 392 (NKID). A G4 region spans residues 389–392 (NKID). The interval 425–427 (SAK) is G5.

It belongs to the TRAFAC class translation factor GTPase superfamily. Classic translation factor GTPase family. IF-2 subfamily.

The protein resides in the cytoplasm. Its function is as follows. One of the essential components for the initiation of protein synthesis. Protects formylmethionyl-tRNA from spontaneous hydrolysis and promotes its binding to the 30S ribosomal subunits. Also involved in the hydrolysis of GTP during the formation of the 70S ribosomal complex. The sequence is that of Translation initiation factor IF-2 from Listeria monocytogenes serovar 1/2a (strain ATCC BAA-679 / EGD-e).